The primary structure comprises 247 residues: Lysosomal membrane ascorbate-dependent ferrireductase CYB561A3 (247 aa).

The Cytoplasmic segment spans residues 1-3 (MRG). A helical membrane pass occupies residues 4-24 (IVGFYITYLLCLILGIACVVL). The region spanning 13 to 223 (LCLILGIACV…FGLVVLKILS (211 aa)) is the Cytochrome b561 domain. Residues 25–46 (VVHWNFMYRDGFAWDGSSKNFN) lie on the Lumenal side of the membrane. The chain crosses the membrane as a helical span at residues 47–67 (WHPVLMVTGMLVLYGNAAVVY). 2 residues coordinate heme b: histidine 48 and arginine 68. Over 68–82 (RIPLTWGHNKLPWKL) the chain is Cytoplasmic. 2 residues coordinate L-ascorbate: lysine 77 and lysine 81. The helical transmembrane segment at 83 to 103 (LHAGLLLLSFIFSVIGLCAVF) threads the bilayer. Heme b is bound by residues histidine 84, 113-116 (NLYS), and histidine 118. Over 104 to 120 (NFHNVHHTANLYSLHSW) the chain is Lumenal. A helical transmembrane segment spans residues 121–141 (VGICTAALFTAQWVMGFTSFL). Over 142–155 (LPCTPMAVRAFVKP) the chain is Cytoplasmic. Residue arginine 150 participates in L-ascorbate binding. The helical transmembrane segment at 156–176 (THVWMGAMILVLSIVSCISGI) threads the bilayer. Heme b contacts are provided by histidine 157 and glutamate 178. At 177-201 (NEKLFFVLKETTNGTKPYSALPPEA) the chain is on the lumenal side. Asparagine 189 carries N-linked (GlcNAc...) asparagine glycosylation. Residues 202–222 (VAANSLGVIIVAFGLVVLKIL) traverse the membrane as a helical segment. The Cytoplasmic segment spans residues 223–247 (SNQMWQRPEPGDDEGVYRPLAYDGS). Heme b is bound at residue glutamine 228.

In terms of assembly, homodimer. Heme b is required as a cofactor.

It is found in the late endosome membrane. It localises to the lysosome membrane. It carries out the reaction Fe(3+)(out) + L-ascorbate(in) = monodehydro-L-ascorbate radical(in) + Fe(2+)(out) + H(+). Its function is as follows. Transmembrane reductase that uses ascorbate as an electron donor in the cytoplasm and transfers electrons across membranes to reduce iron cations Fe(3+) into Fe(2+) in the lumen of the late endosome and lysosome. Reduced iron can then be extruded from the late endosome and lysosome to the cytoplasm by divalent metal-specific transporters. It is therefore most probably involved in endosomal and lysosomal cellular iron homeostasis. This chain is Lysosomal membrane ascorbate-dependent ferrireductase CYB561A3 (cyb561a3a), found in Danio rerio (Zebrafish).